The following is a 99-amino-acid chain: Small ribosomal subunit protein bS20 (99 aa).

This sequence belongs to the bacterial ribosomal protein bS20 family.

Binds directly to 16S ribosomal RNA. This Chlamydia pneumoniae (Chlamydophila pneumoniae) protein is Small ribosomal subunit protein bS20.